The primary structure comprises 525 residues: GMP synthase [glutamine-hydrolyzing] (525 aa).

The region spanning 8-206 (PLLILDFGSQ…VVDICKASTD (199 aa)) is the Glutamine amidotransferase type-1 domain. Cysteine 85 functions as the Nucleophile in the catalytic mechanism. Catalysis depends on residues histidine 180 and glutamate 182. Positions 207 to 400 (WTPEHIIDEA…LGLPHDMVYR (194 aa)) constitute a GMPS ATP-PPase domain. Residue 234–240 (SGGVDSS) participates in ATP binding.

As to quaternary structure, homodimer.

It catalyses the reaction XMP + L-glutamine + ATP + H2O = GMP + L-glutamate + AMP + diphosphate + 2 H(+). It participates in purine metabolism; GMP biosynthesis; GMP from XMP (L-Gln route): step 1/1. Its function is as follows. Catalyzes the synthesis of GMP from XMP. In Legionella pneumophila subsp. pneumophila (strain Philadelphia 1 / ATCC 33152 / DSM 7513), this protein is GMP synthase [glutamine-hydrolyzing].